The sequence spans 151 residues: RNA polymerase-binding transcription factor DksA (151 aa).

A coiled-coil region spans residues 34–54; that stretch reads EAQLSHFKRILEAWRNQLRDE. Zn(2+)-binding residues include C114, C117, C135, and C138. The dksA C4-type zinc finger occupies 114 to 138; it reads CESCGVEIGIRRLEARPTADLCIDC.

This sequence belongs to the DksA family. As to quaternary structure, interacts directly with the RNA polymerase.

It localises to the cytoplasm. Functionally, transcription factor that acts by binding directly to the RNA polymerase (RNAP). Required for negative regulation of rRNA expression and positive regulation of several amino acid biosynthesis promoters. Also required for regulation of fis expression. The sequence is that of RNA polymerase-binding transcription factor DksA from Salmonella typhi.